The chain runs to 668 residues: tRNA 5-methylaminomethyl-2-thiouridine biosynthesis bifunctional protein MnmC (668 aa).

Residues 1–245 (MKHYAIQPAN…KREMLCGVME (245 aa)) are tRNA (mnm(5)s(2)U34)-methyltransferase. Residues 270–668 (IGGGIASALL…LLKGKAVKAG (399 aa)) are FAD-dependent cmnm(5)s(2)U34 oxidoreductase.

This sequence in the N-terminal section; belongs to the methyltransferase superfamily. tRNA (mnm(5)s(2)U34)-methyltransferase family. The protein in the C-terminal section; belongs to the DAO family. FAD serves as cofactor.

Its subcellular location is the cytoplasm. The catalysed reaction is 5-aminomethyl-2-thiouridine(34) in tRNA + S-adenosyl-L-methionine = 5-methylaminomethyl-2-thiouridine(34) in tRNA + S-adenosyl-L-homocysteine + H(+). In terms of biological role, catalyzes the last two steps in the biosynthesis of 5-methylaminomethyl-2-thiouridine (mnm(5)s(2)U) at the wobble position (U34) in tRNA. Catalyzes the FAD-dependent demodification of cmnm(5)s(2)U34 to nm(5)s(2)U34, followed by the transfer of a methyl group from S-adenosyl-L-methionine to nm(5)s(2)U34, to form mnm(5)s(2)U34. The chain is tRNA 5-methylaminomethyl-2-thiouridine biosynthesis bifunctional protein MnmC from Escherichia coli (strain SMS-3-5 / SECEC).